We begin with the raw amino-acid sequence, 333 residues long: Taste receptor type 2 member 123 (333 aa).

The Extracellular segment spans residues 1-14 (MFSQKTNYSHLFTF). Residues 15 to 37 (SIIFYVEIVTGILGNGFIALVNI) form a helical membrane-spanning segment. The Cytoplasmic segment spans residues 38-57 (MDWLKRRRISTADQILTALA). Residues 58 to 77 (LTRLIYVWSVLICILLLFLC) traverse the membrane as a helical segment. Topologically, residues 78 to 91 (PHLSMRPEMFTAIG) are extracellular. Residues 92 to 114 (VIWVVDNHFSIWLATCLGVFYFL) form a helical membrane-spanning segment. Over 115-133 (KIASFSNSLFLYLKWRVKK) the chain is Cytoplasmic. The chain crosses the membrane as a helical span at residues 134–156 (VVLMIILISLIFLMLNISSLGMY). The Extracellular segment spans residues 157–204 (DHFSIDVYEGNMSYNLVDSTHFPRIFLFTNSSKVFLIANSSHVFLPIN). 3 N-linked (GlcNAc...) asparagine glycosylation sites follow: Asn-167, Asn-186, and Asn-195. The chain crosses the membrane as a helical span at residues 205–227 (SLFMLIPFTVSLVAFFVLFLSLW). The Cytoplasmic segment spans residues 228-250 (KHHKKMQVNAKGPRDASTMAHTK). The helical transmembrane segment at 251–273 (ALQIGFSFLLLYAIYLLFIITGI) threads the bilayer. The Extracellular portion of the chain corresponds to 274–282 (LNLDLMRCI). The chain crosses the membrane as a helical span at residues 283-305 (VILLFDHISGAVFSISHSFVLIL). Residues 306-333 (GNSKLRQATLSVLPCLRCRSKDMDTVVF) lie on the Cytoplasmic side of the membrane.

Belongs to the G-protein coupled receptor T2R family. As to expression, expressed in subsets of taste receptor cells of the tongue and palate epithelium and exclusively in gustducin-positive cells. Expressed in the antrum and fundus (part of the stomach), duodenum and in gastric endocrine cells.

It is found in the membrane. Gustducin-coupled receptor implicated in the perception of bitter compounds in the oral cavity and the gastrointestinal tract. Signals through PLCB2 and the calcium-regulated cation channel TRPM5. The polypeptide is Taste receptor type 2 member 123 (Tas2r123) (Rattus norvegicus (Rat)).